A 751-amino-acid polypeptide reads, in one-letter code: Catalase-peroxidase (751 aa).

The interval 1-21 (MSNESKCPFHQTAGGGTTNRD) is disordered. A cross-link (tryptophyl-tyrosyl-methioninium (Trp-Tyr) (with M-270)) is located at residues 90-244 (WHSAGTYRIG…LAAVQMGLIY (155 aa)). Histidine 91 serves as the catalytic Proton acceptor. The disordered stretch occupies residues 195–227 (YGKDQVKAQPPGQGDLVAEPAKHGEEQNRDLSA). Residues 214–227 (PAKHGEEQNRDLSA) show a composition bias toward basic and acidic residues. A cross-link (tryptophyl-tyrosyl-methioninium (Tyr-Met) (with W-90)) is located at residues 244–270 (YVNPEGPEGNPDPVASGKDIRETFGRM). Histidine 285 is a binding site for heme b. Positions 365–387 (AHQWRPKEGKGAGTVPDAHDPGK) are disordered.

Belongs to the peroxidase family. Peroxidase/catalase subfamily. In terms of assembly, homodimer or homotetramer. It depends on heme b as a cofactor. Post-translationally, formation of the three residue Trp-Tyr-Met cross-link is important for the catalase, but not the peroxidase activity of the enzyme.

It catalyses the reaction H2O2 + AH2 = A + 2 H2O. It carries out the reaction 2 H2O2 = O2 + 2 H2O. In terms of biological role, bifunctional enzyme with both catalase and broad-spectrum peroxidase activity. In Pseudomonas putida (strain ATCC 700007 / DSM 6899 / JCM 31910 / BCRC 17059 / LMG 24140 / F1), this protein is Catalase-peroxidase.